The chain runs to 218 residues: Peptide methionine sulfoxide reductase MsrA (218 aa).

The active site involves Cys57.

The protein belongs to the MsrA Met sulfoxide reductase family.

The catalysed reaction is L-methionyl-[protein] + [thioredoxin]-disulfide + H2O = L-methionyl-(S)-S-oxide-[protein] + [thioredoxin]-dithiol. It catalyses the reaction [thioredoxin]-disulfide + L-methionine + H2O = L-methionine (S)-S-oxide + [thioredoxin]-dithiol. In terms of biological role, has an important function as a repair enzyme for proteins that have been inactivated by oxidation. Catalyzes the reversible oxidation-reduction of methionine sulfoxide in proteins to methionine. The protein is Peptide methionine sulfoxide reductase MsrA of Brucella melitensis biotype 1 (strain ATCC 23456 / CCUG 17765 / NCTC 10094 / 16M).